Here is a 459-residue protein sequence, read N- to C-terminus: Fe(3+)-Zn(2+) purple acid phosphatase (459 aa).

The first 22 residues, 1 to 22, serve as a signal peptide directing secretion; sequence MGVVKGLLALALVLNVVVVSNG. Glycine 23 carries the post-translational modification Blocked amino end (Gly). N-linked (GlcNAc...) asparagine; partial glycosylation occurs at asparagine 108. Residue asparagine 136 is glycosylated (N-linked (GlcNAc...) asparagine). Aspartate 162 is a binding site for Fe cation. Residue asparagine 170 is glycosylated (N-linked (GlcNAc...) asparagine). Residues aspartate 191 and tyrosine 194 each contribute to the Fe cation site. Zn(2+) is bound at residue aspartate 191. Asparagine 228 is a Zn(2+) binding site. An N-linked (GlcNAc...) asparagine glycan is attached at asparagine 238. Position 313 (histidine 313) interacts with Zn(2+). Histidine 323 acts as the Proton donor in catalysis. Histidine 350 lines the Zn(2+) pocket. Position 352 (histidine 352) interacts with Fe cation. N-linked (GlcNAc...) asparagine glycosylation is present at asparagine 423.

This sequence belongs to the metallophosphoesterase superfamily. Purple acid phosphatase family. As to quaternary structure, homodimer; disulfide-linked. It depends on Fe cation as a cofactor. The cofactor is Zn(2+).

The protein resides in the secreted. The catalysed reaction is a phosphate monoester + H2O = an alcohol + phosphate. Inhibited by compounds CC24201, CC27209, and MO07123. Inhibited by the tetraoxoanions molybdate and phosphate. Not inhibited by EDTA or tartrate. The polypeptide is Fe(3+)-Zn(2+) purple acid phosphatase (Phaseolus vulgaris (Kidney bean)).